The following is a 518-amino-acid chain: Nitrogenase iron-iron protein alpha chain (518 aa).

[8Fe-7S] cluster-binding residues include Cys-49, Cys-75, and Cys-138. The [8Fe-9S-C-homocitryl] cluster site is built by Cys-257 and His-423.

This sequence belongs to the NifD/NifK/NifE/NifN family. Hexamer of two alpha, two beta, and two delta chains. [8Fe-7S] cluster is required as a cofactor. The cofactor is [8Fe-9S-C-homocitryl] cluster.

It catalyses the reaction N2 + 8 reduced [2Fe-2S]-[ferredoxin] + 16 ATP + 16 H2O = H2 + 8 oxidized [2Fe-2S]-[ferredoxin] + 2 NH4(+) + 16 ADP + 16 phosphate + 6 H(+). Functionally, this iron-iron protein is part of the nitrogenase complex that catalyzes the key enzymatic reactions in nitrogen fixation. Other nitrogenase complexes utilize a molybdenum-iron protein or a vanadium-iron protein. The sequence is that of Nitrogenase iron-iron protein alpha chain (anfD) from Azotobacter vinelandii.